The chain runs to 85 residues: Large ribosomal subunit protein bL27 (85 aa).

The segment covering 1 to 10 (MAQKKGGGST) has biased composition (gly residues). Residues 1 to 21 (MAQKKGGGSTRNGRDSQPKML) are disordered.

It belongs to the bacterial ribosomal protein bL27 family.

The chain is Large ribosomal subunit protein bL27 from Leptothrix cholodnii (strain ATCC 51168 / LMG 8142 / SP-6) (Leptothrix discophora (strain SP-6)).